The following is a 301-amino-acid chain: Methionyl-tRNA formyltransferase (301 aa).

Residue 110 to 113 participates in (6S)-5,6,7,8-tetrahydrofolate binding; the sequence is SLLP.

It belongs to the Fmt family.

The enzyme catalyses L-methionyl-tRNA(fMet) + (6R)-10-formyltetrahydrofolate = N-formyl-L-methionyl-tRNA(fMet) + (6S)-5,6,7,8-tetrahydrofolate + H(+). Attaches a formyl group to the free amino group of methionyl-tRNA(fMet). The formyl group appears to play a dual role in the initiator identity of N-formylmethionyl-tRNA by promoting its recognition by IF2 and preventing the misappropriation of this tRNA by the elongation apparatus. This Acidiphilium cryptum (strain JF-5) protein is Methionyl-tRNA formyltransferase.